An 846-amino-acid polypeptide reads, in one-letter code: Translation initiation factor IF-2 (846 aa).

The tract at residues 94–263 (QRSPEEIQAE…HGFQNPTGPV (170 aa)) is disordered. Residues 96 to 135 (SPEEIQAEQKRELEERRAAENAARDKVEAEVRQRNEEQAR) show a composition bias toward basic and acidic residues. Composition is skewed to low complexity over residues 136–148 (RQAA…APAP) and 158–176 (AAPV…ASED). Composition is skewed to basic and acidic residues over residues 177-206 (AAAR…RGEA) and 230-239 (TTDEESDGAR). A compositionally biased stretch (basic residues) spans 240–253 (RGRGGKSKLKKRNQ). Residues 346–513 (SRAPVVTVMG…AVLLQAEILE (168 aa)) form the tr-type G domain. Positions 355 to 362 (GHVDHGKT) are G1. 355-362 (GHVDHGKT) serves as a coordination point for GTP. Residues 380 to 384 (GITQH) form a G2 region. Residues 401–404 (DTPG) form a G3 region. GTP is bound by residues 401-405 (DTPGH) and 455-458 (NKID). The tract at residues 455–458 (NKID) is G4. The interval 491 to 493 (SAK) is G5.

It belongs to the TRAFAC class translation factor GTPase superfamily. Classic translation factor GTPase family. IF-2 subfamily.

It is found in the cytoplasm. In terms of biological role, one of the essential components for the initiation of protein synthesis. Protects formylmethionyl-tRNA from spontaneous hydrolysis and promotes its binding to the 30S ribosomal subunits. Also involved in the hydrolysis of GTP during the formation of the 70S ribosomal complex. The sequence is that of Translation initiation factor IF-2 from Pseudomonas putida (strain ATCC 700007 / DSM 6899 / JCM 31910 / BCRC 17059 / LMG 24140 / F1).